We begin with the raw amino-acid sequence, 358 residues long: Photosystem II protein D1 3 (358 aa).

3 consecutive transmembrane segments (helical) span residues Tyr28–Thr45, His117–Leu132, and Trp141–Ala155. His117 is a chlorophyll a binding site. Residue Tyr125 coordinates pheophytin a. Residues Asp169 and Glu188 each contribute to the [CaMn4O5] cluster site. A helical membrane pass occupies residues Phe196–Leu217. His197 contributes to the chlorophyll a binding site. A quinone-binding positions include His214 and Ser263–Phe264. Position 214 (His214) interacts with Fe cation. His271 contributes to the Fe cation binding site. Residues Leu273 to Met287 traverse the membrane as a helical segment. His331, Glu332, Asp341, and Ala343 together coordinate [CaMn4O5] cluster. Residues Thr344–Gly358 constitute a propeptide that is removed on maturation.

The protein belongs to the reaction center PufL/M/PsbA/D family. In terms of assembly, PSII is composed of 1 copy each of membrane proteins PsbA, PsbB, PsbC, PsbD, PsbE, PsbF, PsbH, PsbI, PsbJ, PsbK, PsbL, PsbM, PsbT, PsbX, PsbY, PsbZ, Psb30/Ycf12, peripheral proteins PsbO, CyanoQ (PsbQ), PsbU, PsbV and a large number of cofactors. It forms dimeric complexes. The cofactor is The D1/D2 heterodimer binds P680, chlorophylls that are the primary electron donor of PSII, and subsequent electron acceptors. It shares a non-heme iron and each subunit binds pheophytin, quinone, additional chlorophylls, carotenoids and lipids. D1 provides most of the ligands for the Mn4-Ca-O5 cluster of the oxygen-evolving complex (OEC). There is also a Cl(-1) ion associated with D1 and D2, which is required for oxygen evolution. The PSII complex binds additional chlorophylls, carotenoids and specific lipids.. In terms of processing, tyr-160 forms a radical intermediate that is referred to as redox-active TyrZ, YZ or Y-Z. Post-translationally, C-terminally processed by CtpA; processing is essential to allow assembly of the oxygen-evolving complex and thus photosynthetic growth.

The protein localises to the cellular thylakoid membrane. It carries out the reaction 2 a plastoquinone + 4 hnu + 2 H2O = 2 a plastoquinol + O2. Its function is as follows. Photosystem II (PSII) is a light-driven water:plastoquinone oxidoreductase that uses light energy to abstract electrons from H(2)O, generating O(2) and a proton gradient subsequently used for ATP formation. It consists of a core antenna complex that captures photons, and an electron transfer chain that converts photonic excitation into a charge separation. The D1/D2 (PsbA/PsbD) reaction center heterodimer binds P680, the primary electron donor of PSII as well as several subsequent electron acceptors. This Synechococcus sp. (strain CC9311) protein is Photosystem II protein D1 3.